We begin with the raw amino-acid sequence, 483 residues long: Deoxyribodipyrimidine photo-lyase (483 aa).

The Photolyase/cryptochrome alpha/beta domain occupies 2 to 136 (QKNLIWFRND…LVKGFHDNLL (135 aa)). Asn109 and Glu110 together coordinate (6R)-5,10-methylene-5,6,7,8-tetrahydrofolate. Tyr225 is an FAD binding site. Arg229 lines the DNA pocket. 237–241 (TSMLS) contacts FAD. 2 interaction with DNA regions span residues 278 to 285 (QILWREFY) and 345 to 346 (NR). 376–378 (DGD) serves as a coordination point for FAD. Residue Gln408 participates in DNA binding.

It belongs to the DNA photolyase class-1 family. As to quaternary structure, monomer. It depends on FAD as a cofactor. (6R)-5,10-methylene-5,6,7,8-tetrahydrofolate is required as a cofactor.

It carries out the reaction cyclobutadipyrimidine (in DNA) = 2 pyrimidine residues (in DNA).. Its function is as follows. Involved in repair of UV radiation-induced DNA damage. Catalyzes the light-dependent monomerization (300-600 nm) of cyclobutyl pyrimidine dimers (in cis-syn configuration), which are formed between adjacent bases on the same DNA strand upon exposure to ultraviolet radiation. This chain is Deoxyribodipyrimidine photo-lyase (phrB), found in Buchnera aphidicola subsp. Acyrthosiphon pisum (strain APS) (Acyrthosiphon pisum symbiotic bacterium).